Consider the following 39-residue polypeptide: Potassium channel toxin alpha-KTx 2.8 (39 aa).

3 cysteine pairs are disulfide-bonded: C7–C29, C13–C34, and C17–C36.

This sequence belongs to the short scorpion toxin superfamily. Potassium channel inhibitor family. Alpha-KTx 02 subfamily. As to expression, expressed by the venom gland.

Its subcellular location is the secreted. Blocks Kv1.3/KCNA3 voltage-gated potassium channels of human T-lymphocytes (Kd=0.71 nM). The protein is Potassium channel toxin alpha-KTx 2.8 of Centruroides elegans (Bark scorpion).